Reading from the N-terminus, the 560-residue chain is Dihydroxy-acid dehydratase (560 aa).

C50 is a [2Fe-2S] cluster binding site. D82 is a binding site for Mg(2+). Residue C123 coordinates [2Fe-2S] cluster. D124 and K125 together coordinate Mg(2+). At K125 the chain carries N6-carboxylysine. C195 lines the [2Fe-2S] cluster pocket. Residue E447 coordinates Mg(2+). Catalysis depends on S473, which acts as the Proton acceptor.

The protein belongs to the IlvD/Edd family. In terms of assembly, homodimer. It depends on [2Fe-2S] cluster as a cofactor. The cofactor is Mg(2+).

It catalyses the reaction (2R)-2,3-dihydroxy-3-methylbutanoate = 3-methyl-2-oxobutanoate + H2O. It carries out the reaction (2R,3R)-2,3-dihydroxy-3-methylpentanoate = (S)-3-methyl-2-oxopentanoate + H2O. The protein operates within amino-acid biosynthesis; L-isoleucine biosynthesis; L-isoleucine from 2-oxobutanoate: step 3/4. It functions in the pathway amino-acid biosynthesis; L-valine biosynthesis; L-valine from pyruvate: step 3/4. Functions in the biosynthesis of branched-chain amino acids. Catalyzes the dehydration of (2R,3R)-2,3-dihydroxy-3-methylpentanoate (2,3-dihydroxy-3-methylvalerate) into 2-oxo-3-methylpentanoate (2-oxo-3-methylvalerate) and of (2R)-2,3-dihydroxy-3-methylbutanoate (2,3-dihydroxyisovalerate) into 2-oxo-3-methylbutanoate (2-oxoisovalerate), the penultimate precursor to L-isoleucine and L-valine, respectively. The sequence is that of Dihydroxy-acid dehydratase from Thermosynechococcus vestitus (strain NIES-2133 / IAM M-273 / BP-1).